A 166-amino-acid polypeptide reads, in one-letter code: NAD(P)H-quinone oxidoreductase subunit I, chloroplastic (166 aa).

4Fe-4S ferredoxin-type domains lie at 55-84 (GRIH…VDWQ) and 95-124 (VNYS…MTEE). Positions 64, 67, 70, 74, 104, 107, 110, and 114 each coordinate [4Fe-4S] cluster.

It belongs to the complex I 23 kDa subunit family. As to quaternary structure, NDH is composed of at least 16 different subunits, 5 of which are encoded in the nucleus. [4Fe-4S] cluster is required as a cofactor.

It localises to the plastid. It is found in the chloroplast thylakoid membrane. The enzyme catalyses a plastoquinone + NADH + (n+1) H(+)(in) = a plastoquinol + NAD(+) + n H(+)(out). The catalysed reaction is a plastoquinone + NADPH + (n+1) H(+)(in) = a plastoquinol + NADP(+) + n H(+)(out). NDH shuttles electrons from NAD(P)H:plastoquinone, via FMN and iron-sulfur (Fe-S) centers, to quinones in the photosynthetic chain and possibly in a chloroplast respiratory chain. The immediate electron acceptor for the enzyme in this species is believed to be plastoquinone. Couples the redox reaction to proton translocation, and thus conserves the redox energy in a proton gradient. This Coreopsis petrophiloides (Tickseed) protein is NAD(P)H-quinone oxidoreductase subunit I, chloroplastic.